Here is a 436-residue protein sequence, read N- to C-terminus: Nicotinate phosphoribosyltransferase (436 aa).

His-231 carries the phosphohistidine; by autocatalysis modification.

This sequence belongs to the NAPRTase family. In terms of processing, transiently phosphorylated on a His residue during the reaction cycle. Phosphorylation strongly increases the affinity for substrates and increases the rate of nicotinate D-ribonucleotide production. Dephosphorylation regenerates the low-affinity form of the enzyme, leading to product release.

It catalyses the reaction nicotinate + 5-phospho-alpha-D-ribose 1-diphosphate + ATP + H2O = nicotinate beta-D-ribonucleotide + ADP + phosphate + diphosphate. It participates in cofactor biosynthesis; NAD(+) biosynthesis; nicotinate D-ribonucleotide from nicotinate: step 1/1. Functionally, catalyzes the synthesis of beta-nicotinate D-ribonucleotide from nicotinate and 5-phospho-D-ribose 1-phosphate at the expense of ATP. The sequence is that of Nicotinate phosphoribosyltransferase from Vibrio parahaemolyticus serotype O3:K6 (strain RIMD 2210633).